We begin with the raw amino-acid sequence, 476 residues long: Bifunctional protein HldE (476 aa).

A ribokinase region spans residues 1 to 318; sequence MKPVLPDYSK…AEAVHGSKDT (318 aa). Residue 195–198 coordinates ATP; that stretch reads NMSE. D264 is an active-site residue. The tract at residues 344-476 is cytidylyltransferase; it reads MTNGCFDILH…IIEAIKGGRG (133 aa).

The protein in the N-terminal section; belongs to the carbohydrate kinase PfkB family. It in the C-terminal section; belongs to the cytidylyltransferase family. In terms of assembly, homodimer.

It catalyses the reaction D-glycero-beta-D-manno-heptose 7-phosphate + ATP = D-glycero-beta-D-manno-heptose 1,7-bisphosphate + ADP + H(+). It carries out the reaction D-glycero-beta-D-manno-heptose 1-phosphate + ATP + H(+) = ADP-D-glycero-beta-D-manno-heptose + diphosphate. It participates in nucleotide-sugar biosynthesis; ADP-L-glycero-beta-D-manno-heptose biosynthesis; ADP-L-glycero-beta-D-manno-heptose from D-glycero-beta-D-manno-heptose 7-phosphate: step 1/4. The protein operates within nucleotide-sugar biosynthesis; ADP-L-glycero-beta-D-manno-heptose biosynthesis; ADP-L-glycero-beta-D-manno-heptose from D-glycero-beta-D-manno-heptose 7-phosphate: step 3/4. In terms of biological role, catalyzes the phosphorylation of D-glycero-D-manno-heptose 7-phosphate at the C-1 position to selectively form D-glycero-beta-D-manno-heptose-1,7-bisphosphate. Catalyzes the ADP transfer from ATP to D-glycero-beta-D-manno-heptose 1-phosphate, yielding ADP-D-glycero-beta-D-manno-heptose. This is Bifunctional protein HldE from Vibrio cholerae serotype O1 (strain M66-2).